The sequence spans 179 residues: tRNA-splicing endonuclease (179 aa).

Active-site residues include Y115, H123, and K154.

Belongs to the tRNA-intron endonuclease family. Archaeal short subfamily. In terms of assembly, homotetramer; although the tetramer contains four active sites, only two participate in the cleavage. Therefore, it should be considered as a dimer of dimers.

It catalyses the reaction pretRNA = a 3'-half-tRNA molecule with a 5'-OH end + a 5'-half-tRNA molecule with a 2',3'-cyclic phosphate end + an intron with a 2',3'-cyclic phosphate and a 5'-hydroxyl terminus.. Endonuclease that removes tRNA introns. Cleaves pre-tRNA at the 5'- and 3'-splice sites to release the intron. The products are an intron and two tRNA half-molecules bearing 2',3' cyclic phosphate and 5'-OH termini. Recognizes a pseudosymmetric substrate in which 2 bulged loops of 3 bases are separated by a stem of 4 bp. The protein is tRNA-splicing endonuclease of Methanopyrus kandleri (strain AV19 / DSM 6324 / JCM 9639 / NBRC 100938).